We begin with the raw amino-acid sequence, 404 residues long: Probable tRNA sulfurtransferase (404 aa).

In terms of domain architecture, THUMP spans 60 to 165 (QPIVEALKLV…DEAAYISYEE (106 aa)). Residues 183–184 (ML), 208–209 (HF), arginine 265, glycine 287, and glutamine 296 contribute to the ATP site.

Belongs to the ThiI family.

It localises to the cytoplasm. The enzyme catalyses [ThiI sulfur-carrier protein]-S-sulfanyl-L-cysteine + a uridine in tRNA + 2 reduced [2Fe-2S]-[ferredoxin] + ATP + H(+) = [ThiI sulfur-carrier protein]-L-cysteine + a 4-thiouridine in tRNA + 2 oxidized [2Fe-2S]-[ferredoxin] + AMP + diphosphate. It catalyses the reaction [ThiS sulfur-carrier protein]-C-terminal Gly-Gly-AMP + S-sulfanyl-L-cysteinyl-[cysteine desulfurase] + AH2 = [ThiS sulfur-carrier protein]-C-terminal-Gly-aminoethanethioate + L-cysteinyl-[cysteine desulfurase] + A + AMP + 2 H(+). Its pathway is cofactor biosynthesis; thiamine diphosphate biosynthesis. Its function is as follows. Catalyzes the ATP-dependent transfer of a sulfur to tRNA to produce 4-thiouridine in position 8 of tRNAs, which functions as a near-UV photosensor. Also catalyzes the transfer of sulfur to the sulfur carrier protein ThiS, forming ThiS-thiocarboxylate. This is a step in the synthesis of thiazole, in the thiamine biosynthesis pathway. The sulfur is donated as persulfide by IscS. This is Probable tRNA sulfurtransferase from Streptococcus pyogenes serotype M1.